Reading from the N-terminus, the 457-residue chain is Protein OS-9 homolog (457 aa).

The signal sequence occupies residues methionine 1 to alanine 22. Asparagine 47 and asparagine 71 each carry an N-linked (GlcNAc...) asparagine glycan. An MRH domain is found at asparagine 104–leucine 222. A mannooligosaccharide derivative is bound at residue tryptophan 116. Asparagine 142 and asparagine 147 each carry an N-linked (GlcNAc...) asparagine glycan. Intrachain disulfides connect cysteine 174–cysteine 208 and cysteine 189–cysteine 220. 4 residues coordinate a mannooligosaccharide derivative: aspartate 175, arginine 181, glutamate 204, and tyrosine 210. Asparagine 389 carries N-linked (GlcNAc...) asparagine glycosylation.

Belongs to the OS-9 family. As to quaternary structure, interacts with missfolded ER lumenal proteins.

The protein resides in the endoplasmic reticulum membrane. Its function is as follows. Lectin involved in the quality control of the secretory pathway. As a member of the endoplasmic reticulum-associated degradation lumenal (ERAD-L) surveillance system, targets misfolded endoplasmic reticulum lumenal glycoproteins for degradation. This is Protein OS-9 homolog (YOS9) from Kluyveromyces lactis (strain ATCC 8585 / CBS 2359 / DSM 70799 / NBRC 1267 / NRRL Y-1140 / WM37) (Yeast).